The primary structure comprises 172 residues: Adenine phosphoribosyltransferase (172 aa).

This sequence belongs to the purine/pyrimidine phosphoribosyltransferase family. In terms of assembly, homodimer.

The protein localises to the cytoplasm. The enzyme catalyses AMP + diphosphate = 5-phospho-alpha-D-ribose 1-diphosphate + adenine. It functions in the pathway purine metabolism; AMP biosynthesis via salvage pathway; AMP from adenine: step 1/1. Functionally, catalyzes a salvage reaction resulting in the formation of AMP, that is energically less costly than de novo synthesis. The chain is Adenine phosphoribosyltransferase from Streptococcus agalactiae serotype Ia (strain ATCC 27591 / A909 / CDC SS700).